The primary structure comprises 572 residues: Arginine--tRNA ligase (572 aa).

A 'HIGH' region motif is present at residues 122–132 (PNLAKEMHVGH).

The protein belongs to the class-I aminoacyl-tRNA synthetase family. As to quaternary structure, monomer.

It is found in the cytoplasm. The enzyme catalyses tRNA(Arg) + L-arginine + ATP = L-arginyl-tRNA(Arg) + AMP + diphosphate. In Neisseria meningitidis serogroup C / serotype 2a (strain ATCC 700532 / DSM 15464 / FAM18), this protein is Arginine--tRNA ligase.